A 235-amino-acid polypeptide reads, in one-letter code: MSDKPNNFPPLPRFIPLKPCFYQDFDTDIPDLHRTTAKRLYYLWMLNSITLGVNLIGCLAWLIGGGSATNFGLAFLWLILFTPCSYVCWFRPIYKAFKTDSSFNFMAFFFTFTAQLVISIIQAVGIPGWGVCGWIASISFFGTNVGSAVVMLIPTIMFTAVAVLSFVALTKVHRFYRGAGGSLSKAQEEWTTGAWKNPHVQQAAQNAAFGATQGAMTQNEPQYSATPNYGYSNEM.

Residues Met-1–Arg-39 lie on the Cytoplasmic side of the membrane. A helical transmembrane segment spans residues Leu-40–Ala-60. Topologically, residues Trp-61–Ser-67 are extracellular. Residues Ala-68–Cys-88 form a helical membrane-spanning segment. Residues Trp-89–Ser-102 lie on the Cytoplasmic side of the membrane. Residues Phe-103 to Gly-125 traverse the membrane as a helical segment. The Extracellular segment spans residues Ile-126–Ala-148. A helical transmembrane segment spans residues Val-149–Leu-169. At Thr-170–Met-235 the chain is on the cytoplasmic side.

It belongs to the SCAMP family. SCAMP5 subfamily.

It localises to the cell membrane. Its subcellular location is the golgi apparatus membrane. The protein localises to the golgi apparatus. The protein resides in the trans-Golgi network membrane. It is found in the recycling endosome membrane. It localises to the cytoplasmic vesicle. Its subcellular location is the secretory vesicle. The protein localises to the synaptic vesicle membrane. In terms of biological role, required for the calcium-dependent exocytosis of signal sequence-containing cytokines. Probably acts in cooperation with the SNARE machinery. This is Secretory carrier-associated membrane protein 5A (scamp5-a) from Xenopus laevis (African clawed frog).